The chain runs to 406 residues: Autotransporter heptosyltransferase TibC (406 aa).

Positions 107, 108, and 109 each coordinate ADP-D-glycero-beta-D-manno-heptose. D110 (proton acceptor) is an active-site residue. ADP-D-glycero-beta-D-manno-heptose is bound by residues Q224, T226, K230, R257, L281, G302, and E326. Fe(3+)-binding residues include C339, C342, C358, and C370.

This sequence belongs to the glycosyltransferase 9 family. Homododecamer composed of 6 homodimers forming a ring. Fe(3+) serves as cofactor.

It carries out the reaction ADP-D-glycero-beta-D-manno-heptose + L-seryl-[protein] = O-(D-glycero-alpha-D-manno-heptosyl)-L-seryl-[protein] + ADP + H(+). Glycosylates adhesin TibA. Specifically adds anomer D-glycero-beta-D-manno-heptose. Cannot use ADP-L-glycero-beta-D-manno-heptose as a sugar donor. This chain is Autotransporter heptosyltransferase TibC, found in Escherichia coli O78:H11 (strain H10407 / ETEC).